Reading from the N-terminus, the 689-residue chain is 1,4-alpha-glucan-branching enzyme (689 aa).

2 residues coordinate (1,4-alpha-D-glucosyl)n: tryptophan 93 and lysine 128. The active-site Nucleophile is the aspartate 345. Glutamate 400 (proton donor) is an active-site residue.

Belongs to the glycosyl hydrolase 13 family. GlgB subfamily.

It is found in the cytoplasm. The catalysed reaction is Transfers a segment of a (1-&gt;4)-alpha-D-glucan chain to a primary hydroxy group in a similar glucan chain.. It functions in the pathway glycan biosynthesis; glycogen biosynthesis. In terms of biological role, glycogen-branching enzyme participates in the glycogen biosynthetic process along with glycogenin and glycogen synthase. Generates alpha-1,6-glucosidic branches from alpha-1,4-linked glucose chains, to increase solubility of the glycogen polymer. The protein is 1,4-alpha-glucan-branching enzyme (gbeA) of Aspergillus oryzae (strain ATCC 42149 / RIB 40) (Yellow koji mold).